Consider the following 245-residue polypeptide: Dehydrogenase/reductase SDR family member 6 (245 aa).

Residues 16-18 (QGI), aspartate 37, and aspartate 58 each bind NAD(+). Arginine 144 contributes to the substrate binding site. Tyrosine 147 (proton acceptor) is an active-site residue. Residues lysine 151 and 180–184 (VDTPS) each bind NAD(+). Substrate-binding residues include arginine 188 and arginine 205.

This sequence belongs to the short-chain dehydrogenases/reductases (SDR) family. In terms of assembly, homotetramer.

The protein localises to the cytoplasm. The catalysed reaction is cis-4-hydroxy-L-proline + NAD(+) = 4-oxo-L-proline + NADH + H(+). It carries out the reaction (R)-3-hydroxybutanoate + NAD(+) = acetoacetate + NADH + H(+). The protein operates within amino-acid metabolism. It functions in the pathway siderophore biosynthesis. Its function is as follows. NAD(H)-dependent dehydrogenase/reductase with a preference for cyclic substrates. Catalyzes stereoselective conversion of 4-oxo-L-proline to cis-4-hydroxy-L-proline, likely a detoxification mechanism for ketoprolines. Mediates the formation of 2,5-dihydroxybenzoate (2,5-DHBA), a siderophore that chelates free cytoplasmic iron and associates with LCN2, thereby regulating iron transport and homeostasis while protecting cells against free radical-induced oxidative stress. The iron-siderophore complex is imported into mitochondria, providing an iron source for mitochondrial metabolic processes in particular heme synthesis. May act as a 3-hydroxybutyrate dehydrogenase. This Rattus norvegicus (Rat) protein is Dehydrogenase/reductase SDR family member 6.